The sequence spans 322 residues: Beta-ketoacyl-[acyl-carrier-protein] synthase III (322 aa).

Catalysis depends on residues Cys113 and His249. The segment at 250-254 (QANVR) is ACP-binding. Asn279 is a catalytic residue.

Belongs to the thiolase-like superfamily. FabH family. As to quaternary structure, homodimer.

Its subcellular location is the cytoplasm. The catalysed reaction is malonyl-[ACP] + acetyl-CoA + H(+) = 3-oxobutanoyl-[ACP] + CO2 + CoA. The protein operates within lipid metabolism; fatty acid biosynthesis. Its function is as follows. Catalyzes the condensation reaction of fatty acid synthesis by the addition to an acyl acceptor of two carbons from malonyl-ACP. Catalyzes the first condensation reaction which initiates fatty acid synthesis and may therefore play a role in governing the total rate of fatty acid production. Possesses both acetoacetyl-ACP synthase and acetyl transacylase activities. Its substrate specificity determines the biosynthesis of branched-chain and/or straight-chain of fatty acids. The polypeptide is Beta-ketoacyl-[acyl-carrier-protein] synthase III (Anaplasma marginale (strain St. Maries)).